Reading from the N-terminus, the 166-residue chain is Interferon gamma (166 aa).

An N-terminal signal peptide occupies residues 1 to 23 (MSYTTYFLAFQLCVTLCFSGSYC). Pyrrolidone carboxylic acid is present on glutamine 24. Asparagine 39 and asparagine 106 each carry an N-linked (GlcNAc...) asparagine glycan.

The protein belongs to the type II (or gamma) interferon family. Homodimer. Interacts with IFNGR1 (via extracellular domain); this interaction promotes IFNGR1 dimerization. Released primarily from activated T lymphocytes.

It localises to the secreted. Its function is as follows. Type II interferon produced by immune cells such as T-cells and NK cells that plays crucial roles in antimicrobial, antiviral, and antitumor responses by activating effector immune cells and enhancing antigen presentation. Primarily signals through the JAK-STAT pathway after interaction with its receptor IFNGR1 to affect gene regulation. Upon IFNG binding, IFNGR1 intracellular domain opens out to allow association of downstream signaling components JAK2, JAK1 and STAT1, leading to STAT1 activation, nuclear translocation and transcription of IFNG-regulated genes. Many of the induced genes are transcription factors such as IRF1 that are able to further drive regulation of a next wave of transcription. Plays a role in class I antigen presentation pathway by inducing a replacement of catalytic proteasome subunits with immunoproteasome subunits. In turn, increases the quantity, quality, and repertoire of peptides for class I MHC loading. Increases the efficiency of peptide generation also by inducing the expression of activator PA28 that associates with the proteasome and alters its proteolytic cleavage preference. Up-regulates as well MHC II complexes on the cell surface by promoting expression of several key molecules such as cathepsins B/CTSB, H/CTSH, and L/CTSL. Participates in the regulation of hematopoietic stem cells during development and under homeostatic conditions by affecting their development, quiescence, and differentiation. In Sus scrofa (Pig), this protein is Interferon gamma (IFNG).